Consider the following 2341-residue polypeptide: Pecanex-like protein 1 (2341 aa).

The next 2 membrane-spanning stretches (helical) occupy residues 28–50 and 57–74; these read ATFV…FTLY and MIIV…FIVL. A disordered region spans residues 98–163; it reads FTDQRTKAEQ…SNQIGSGSSR (66 aa). N-linked (GlcNAc...) asparagine glycosylation is present at N109. Residues 143 to 163 show a composition bias toward polar residues; the sequence is SSRNSYAGLDPSNQIGSGSSR. N215 carries N-linked (GlcNAc...) asparagine glycosylation. Disordered stretches follow at residues 270 to 294, 311 to 331, and 344 to 689; these read HSHS…VAFP, DPVS…SLVE, and DLKI…TRAR. A compositionally biased stretch (basic residues) spans 272–282; it reads HSYRKDHRPRG. Composition is skewed to polar residues over residues 320-331 and 347-356; these read KPLSGSKESLVE and INTSQPPTKS. A glycan (N-linked (GlcNAc...) asparagine) is linked at N348. Positions 370–388 are enriched in low complexity; sequence SLRSLSTRSSGSTESYCSG. Residue N394 is glycosylated (N-linked (GlcNAc...) asparagine). The span at 394–404 shows a compositional bias: polar residues; that stretch reads NSTVSSYKSEQ. 3 stretches are compositionally biased toward basic and acidic residues: residues 430-455, 465-478, and 527-544; these read KKEC…EKIA, HEAK…EMHN, and SKVR…DVRP. The segment covering 554-569 has biased composition (basic residues); the sequence is ASAHKSGRRRTGKKRA. Residues 605 to 635 are compositionally biased toward low complexity; sequence QSDLSRASSVQSAHQFSSDSSSSTTSHSCQS. Residue N702 is glycosylated (N-linked (GlcNAc...) asparagine). Positions 756-834 are disordered; that stretch reads QVAFPEGEEQ…STAQVKVQSR (79 aa). Residues 814 to 832 show a composition bias toward low complexity; sequence LSLQDGQQGQQSTAQVKVQ. 2 N-linked (GlcNAc...) asparagine glycosylation sites follow: N852 and N863. 3 consecutive transmembrane segments (helical) span residues 1003-1025, 1032-1049, and 1067-1089; these read ILEN…ILLI, IWVF…YSLL, and IAYS…DYGS. N-linked (GlcNAc...) asparagine glycosylation occurs at N1091. Residues 1110–1132 form a helical membrane-spanning segment; sequence FISARDLVIVFTLCFPIVFFIGL. A glycan (N-linked (GlcNAc...) asparagine) is linked at N1155. The next 4 helical transmembrane spans lie at 1160-1182, 1194-1213, 1266-1288, and 1295-1312; these read LLAA…GLCY, IPVL…YHLS, LVVC…FTVL, and VLYT…YVLP. N1579, N1720, N1982, N2062, and N2072 each carry an N-linked (GlcNAc...) asparagine glycan. Disordered regions lie at residues 2062-2120 and 2217-2237; these read NATT…SPAR and GQSS…NNSH. 3 stretches are compositionally biased toward polar residues: residues 2069–2078, 2096–2114, and 2217–2236; these read PHSNVTQGSI, YPPT…SGLV, and GQSS…ANNS. N-linked (GlcNAc...) asparagine glycosylation is found at N2234 and N2260.

The protein belongs to the pecanex family.

The protein resides in the membrane. The chain is Pecanex-like protein 1 from Homo sapiens (Human).